The chain runs to 419 residues: Glutamyl-tRNA reductase (419 aa).

Substrate is bound by residues 49 to 52, S107, 112 to 114, and Q118; these read TCNR and EPQ. C50 acts as the Nucleophile in catalysis. 187–192 serves as a coordination point for NADP(+); sequence GAGETI.

This sequence belongs to the glutamyl-tRNA reductase family. In terms of assembly, homodimer.

The enzyme catalyses (S)-4-amino-5-oxopentanoate + tRNA(Glu) + NADP(+) = L-glutamyl-tRNA(Glu) + NADPH + H(+). The protein operates within porphyrin-containing compound metabolism; protoporphyrin-IX biosynthesis; 5-aminolevulinate from L-glutamyl-tRNA(Glu): step 1/2. Catalyzes the NADPH-dependent reduction of glutamyl-tRNA(Glu) to glutamate 1-semialdehyde (GSA). The protein is Glutamyl-tRNA reductase of Vibrio atlanticus (strain LGP32) (Vibrio splendidus (strain Mel32)).